We begin with the raw amino-acid sequence, 573 residues long: DNA ligase (573 aa).

Glu250 lines the ATP pocket. The active-site N6-AMP-lysine intermediate is the Lys252. ATP-binding residues include Arg257, Arg272, Glu301, Phe342, Arg432, and Lys438.

Belongs to the ATP-dependent DNA ligase family. It depends on Mg(2+) as a cofactor.

The enzyme catalyses ATP + (deoxyribonucleotide)n-3'-hydroxyl + 5'-phospho-(deoxyribonucleotide)m = (deoxyribonucleotide)n+m + AMP + diphosphate.. In terms of biological role, DNA ligase that seals nicks in double-stranded DNA during DNA replication, DNA recombination and DNA repair. The sequence is that of DNA ligase from Methanococcus vannielii (strain ATCC 35089 / DSM 1224 / JCM 13029 / OCM 148 / SB).